A 180-amino-acid chain; its full sequence is Probable macrolide acetyltransferase (180 aa).

Belongs to the transferase hexapeptide repeat family.

This is Probable macrolide acetyltransferase from Lysinibacillus sphaericus (Bacillus sphaericus).